A 382-amino-acid chain; its full sequence is MKALHFGAGNIGRGFIGKLLADAGIQLTFADVNQVVLDALNARHSYQVHVVGETEQVDTVSGVNAVSSIGDDVVDLIAQVDLVTTAVGPVVLERIAPAIAKGLVKRKEQGNESPLNIIACENMVRGTTQLKGHVMNALPEDAKAWVEEHVGFVDSAVDRIVPPSASATNDPLEVTVETFSEWIVDKTQFKGALPNIPGMELTDNLMAFVERKLFTLNTGHAITAYLGKLAGHQTIRDAILDEKIRAVVKGAMEESGAVLIKRYGFDADKHAAYIQKILGRFENPYLKDDVERVGRQPLRKLSAGDRLIKPLLGTLEYGLPHKNLIEGIAAAMHFRSEDDPQAQELAALIADKGPQAALAQISGLDANSEVVSEAVTAYKAMQ.

Residue 3 to 14 (ALHFGAGNIGRG) coordinates NAD(+). The residue at position 269 (lysine 269) is an N6-acetyllysine.

Belongs to the mannitol dehydrogenase family.

The catalysed reaction is D-mannitol 1-phosphate + NAD(+) = beta-D-fructose 6-phosphate + NADH + H(+). The polypeptide is Mannitol-1-phosphate 5-dehydrogenase (Escherichia coli O81 (strain ED1a)).